Here is a 183-residue protein sequence, read N- to C-terminus: Ferritin heavy polypeptide-like 17 (183 aa).

The region spanning 11–160 (QKYDTNCDAA…GYVSNLRKIC (150 aa)) is the Ferritin-like diiron domain. Fe cation is bound by residues Glu-28, His-66, Glu-108, and Gln-142.

It belongs to the ferritin family. Testis specific. Also expressed in several cancers.

The protein is Ferritin heavy polypeptide-like 17 (FTHL17) of Homo sapiens (Human).